Here is a 319-residue protein sequence, read N- to C-terminus: Malate dehydrogenase (319 aa).

Residues 10 to 15 (GAGNIG) and aspartate 34 each bind NAD(+). Residues arginine 83 and arginine 89 each contribute to the substrate site. NAD(+)-binding positions include asparagine 96 and 119–121 (ITN). Substrate-binding residues include asparagine 121 and arginine 152. The active-site Proton acceptor is the histidine 176.

This sequence belongs to the LDH/MDH superfamily. MDH type 3 family.

It catalyses the reaction (S)-malate + NAD(+) = oxaloacetate + NADH + H(+). Functionally, catalyzes the reversible oxidation of malate to oxaloacetate. This chain is Malate dehydrogenase, found in Francisella philomiragia subsp. philomiragia (strain ATCC 25017 / CCUG 19701 / FSC 153 / O#319-036).